Here is a 383-residue protein sequence, read N- to C-terminus: Serpin B5 (383 aa).

N-linked (GlcNAc...) asparagine glycans are attached at residues N106, N133, N176, and N361.

This sequence belongs to the serpin family. Ov-serpin subfamily.

It is found in the secreted. The protein resides in the extracellular space. May not exhibit serine protease inhibitory activity. The sequence is that of Serpin B5 (serpinb5) from Xenopus laevis (African clawed frog).